We begin with the raw amino-acid sequence, 371 residues long: DNA-directed RNA polymerase subunit alpha (371 aa).

The tract at residues 1–248 (MSVKYGKFEM…KHFEVFNQFN (248 aa)) is alpha N-terminal domain (alpha-NTD). Positions 264–371 (DQDELMDKLS…KELVKHEDAK (108 aa)) are alpha C-terminal domain (alpha-CTD).

It belongs to the RNA polymerase alpha chain family. In terms of assembly, homodimer. The RNAP catalytic core consists of 2 alpha, 1 beta, 1 beta' and 1 omega subunit. When a sigma factor is associated with the core the holoenzyme is formed, which can initiate transcription.

The catalysed reaction is RNA(n) + a ribonucleoside 5'-triphosphate = RNA(n+1) + diphosphate. In terms of biological role, DNA-dependent RNA polymerase catalyzes the transcription of DNA into RNA using the four ribonucleoside triphosphates as substrates. The sequence is that of DNA-directed RNA polymerase subunit alpha from Protochlamydia amoebophila (strain UWE25).